Consider the following 465-residue polypeptide: Glutamate--tRNA ligase 1 (465 aa).

The short motif at proline 8–asparagine 18 is the 'HIGH' region element. The 'KMSKS' region signature appears at proline 249–arginine 253. Residue lysine 252 participates in ATP binding.

The protein belongs to the class-I aminoacyl-tRNA synthetase family. Glutamate--tRNA ligase type 1 subfamily. Monomer.

Its subcellular location is the cytoplasm. The catalysed reaction is tRNA(Glu) + L-glutamate + ATP = L-glutamyl-tRNA(Glu) + AMP + diphosphate. Catalyzes the attachment of glutamate to tRNA(Glu) in a two-step reaction: glutamate is first activated by ATP to form Glu-AMP and then transferred to the acceptor end of tRNA(Glu). The chain is Glutamate--tRNA ligase 1 from Coxiella burnetii (strain CbuG_Q212) (Coxiella burnetii (strain Q212)).